The chain runs to 100 residues: Aspartyl/glutamyl-tRNA(Asn/Gln) amidotransferase subunit C (100 aa).

It belongs to the GatC family. In terms of assembly, heterotrimer of A, B and C subunits.

It carries out the reaction L-glutamyl-tRNA(Gln) + L-glutamine + ATP + H2O = L-glutaminyl-tRNA(Gln) + L-glutamate + ADP + phosphate + H(+). The catalysed reaction is L-aspartyl-tRNA(Asn) + L-glutamine + ATP + H2O = L-asparaginyl-tRNA(Asn) + L-glutamate + ADP + phosphate + 2 H(+). Functionally, allows the formation of correctly charged Asn-tRNA(Asn) or Gln-tRNA(Gln) through the transamidation of misacylated Asp-tRNA(Asn) or Glu-tRNA(Gln) in organisms which lack either or both of asparaginyl-tRNA or glutaminyl-tRNA synthetases. The reaction takes place in the presence of glutamine and ATP through an activated phospho-Asp-tRNA(Asn) or phospho-Glu-tRNA(Gln). The protein is Aspartyl/glutamyl-tRNA(Asn/Gln) amidotransferase subunit C of Rickettsia bellii (strain RML369-C).